Consider the following 291-residue polypeptide: Light-independent protochlorophyllide reductase iron-sulfur ATP-binding protein (291 aa).

Residues 10-15 (GIGKST) and Lys39 each bind ATP. A Mg(2+)-binding site is contributed by Ser14. Cys95 and Cys129 together coordinate [4Fe-4S] cluster. 180–181 (NR) is a binding site for ATP.

It belongs to the NifH/BchL/ChlL family. As to quaternary structure, homodimer. Protochlorophyllide reductase is composed of three subunits; ChlL, ChlN and ChlB. [4Fe-4S] cluster is required as a cofactor.

It localises to the plastid. Its subcellular location is the chloroplast. The enzyme catalyses chlorophyllide a + oxidized 2[4Fe-4S]-[ferredoxin] + 2 ADP + 2 phosphate = protochlorophyllide a + reduced 2[4Fe-4S]-[ferredoxin] + 2 ATP + 2 H2O. It participates in porphyrin-containing compound metabolism; chlorophyll biosynthesis (light-independent). Component of the dark-operative protochlorophyllide reductase (DPOR) that uses Mg-ATP and reduced ferredoxin to reduce ring D of protochlorophyllide (Pchlide) to form chlorophyllide a (Chlide). This reaction is light-independent. The L component serves as a unique electron donor to the NB-component of the complex, and binds Mg-ATP. This Picea abies (Norway spruce) protein is Light-independent protochlorophyllide reductase iron-sulfur ATP-binding protein.